A 226-amino-acid polypeptide reads, in one-letter code: 7-cyano-7-deazaguanine synthase (226 aa).

An ATP-binding site is contributed by 7-17 (LSGGMDSLVTT). Zn(2+) is bound by residues Cys187, Cys195, Cys198, and Cys201.

Belongs to the QueC family. Zn(2+) is required as a cofactor.

It carries out the reaction 7-carboxy-7-deazaguanine + NH4(+) + ATP = 7-cyano-7-deazaguanine + ADP + phosphate + H2O + H(+). Its pathway is purine metabolism; 7-cyano-7-deazaguanine biosynthesis. Catalyzes the ATP-dependent conversion of 7-carboxy-7-deazaguanine (CDG) to 7-cyano-7-deazaguanine (preQ(0)). This is 7-cyano-7-deazaguanine synthase from Chlorobium phaeobacteroides (strain DSM 266 / SMG 266 / 2430).